A 189-amino-acid polypeptide reads, in one-letter code: Elongation factor P (189 aa).

It belongs to the elongation factor P family.

The protein localises to the cytoplasm. Its pathway is protein biosynthesis; polypeptide chain elongation. In terms of biological role, involved in peptide bond synthesis. Stimulates efficient translation and peptide-bond synthesis on native or reconstituted 70S ribosomes in vitro. Probably functions indirectly by altering the affinity of the ribosome for aminoacyl-tRNA, thus increasing their reactivity as acceptors for peptidyl transferase. The sequence is that of Elongation factor P from Aster yellows witches'-broom phytoplasma (strain AYWB).